We begin with the raw amino-acid sequence, 68 residues long: Pleurocidin (68 aa).

Positions 1 to 22 (MKFTATFLMMAIFVLMVEPGEC) are cleaved as a signal peptide. The propeptide occupies 48-68 (GDKQELNKRAVDEDPNVIVFE).

Belongs to the pleurocidin family. In terms of tissue distribution, goblet cells.

It localises to the secreted. The protein localises to the membrane. Functionally, antimicrobial peptide with potent activity against Gram-positive and Gram-negative bacteria. Activity against E.coli and B.subtilis. Weaker activity against L.mucor, s.marcescens and P.aeruginosa. May play a role in innate host defense. This chain is Pleurocidin (ple1), found in Pseudopleuronectes americanus (Winter flounder).